Here is a 475-residue protein sequence, read N- to C-terminus: L-seryl-tRNA(Sec) selenium transferase (475 aa).

Lysine 295 is subject to N6-(pyridoxal phosphate)lysine.

It belongs to the SelA family. Pyridoxal 5'-phosphate is required as a cofactor.

The protein localises to the cytoplasm. It carries out the reaction L-seryl-tRNA(Sec) + selenophosphate + H(+) = L-selenocysteinyl-tRNA(Sec) + phosphate. It participates in aminoacyl-tRNA biosynthesis; selenocysteinyl-tRNA(Sec) biosynthesis; selenocysteinyl-tRNA(Sec) from L-seryl-tRNA(Sec) (bacterial route): step 1/1. Its function is as follows. Converts seryl-tRNA(Sec) to selenocysteinyl-tRNA(Sec) required for selenoprotein biosynthesis. The polypeptide is L-seryl-tRNA(Sec) selenium transferase (Desulfovibrio desulfuricans (strain ATCC 27774 / DSM 6949 / MB)).